A 309-amino-acid chain; its full sequence is 4-hydroxy-3-methylbut-2-enyl diphosphate reductase (309 aa).

A [4Fe-4S] cluster-binding site is contributed by Cys12. 2 residues coordinate (2E)-4-hydroxy-3-methylbut-2-enyl diphosphate: His41 and His74. Dimethylallyl diphosphate contacts are provided by His41 and His74. Isopentenyl diphosphate-binding residues include His41 and His74. Cys96 serves as a coordination point for [4Fe-4S] cluster. His124 contacts (2E)-4-hydroxy-3-methylbut-2-enyl diphosphate. Position 124 (His124) interacts with dimethylallyl diphosphate. His124 is an isopentenyl diphosphate binding site. Glu126 (proton donor) is an active-site residue. Thr167 is a (2E)-4-hydroxy-3-methylbut-2-enyl diphosphate binding site. Cys197 provides a ligand contact to [4Fe-4S] cluster. Residues Ser225, Ser226, Asn227, and Ser269 each contribute to the (2E)-4-hydroxy-3-methylbut-2-enyl diphosphate site. Residues Ser225, Ser226, Asn227, and Ser269 each contribute to the dimethylallyl diphosphate site. 4 residues coordinate isopentenyl diphosphate: Ser225, Ser226, Asn227, and Ser269.

This sequence belongs to the IspH family. It depends on [4Fe-4S] cluster as a cofactor.

It carries out the reaction isopentenyl diphosphate + 2 oxidized [2Fe-2S]-[ferredoxin] + H2O = (2E)-4-hydroxy-3-methylbut-2-enyl diphosphate + 2 reduced [2Fe-2S]-[ferredoxin] + 2 H(+). The enzyme catalyses dimethylallyl diphosphate + 2 oxidized [2Fe-2S]-[ferredoxin] + H2O = (2E)-4-hydroxy-3-methylbut-2-enyl diphosphate + 2 reduced [2Fe-2S]-[ferredoxin] + 2 H(+). Its pathway is isoprenoid biosynthesis; dimethylallyl diphosphate biosynthesis; dimethylallyl diphosphate from (2E)-4-hydroxy-3-methylbutenyl diphosphate: step 1/1. It functions in the pathway isoprenoid biosynthesis; isopentenyl diphosphate biosynthesis via DXP pathway; isopentenyl diphosphate from 1-deoxy-D-xylulose 5-phosphate: step 6/6. Catalyzes the conversion of 1-hydroxy-2-methyl-2-(E)-butenyl 4-diphosphate (HMBPP) into a mixture of isopentenyl diphosphate (IPP) and dimethylallyl diphosphate (DMAPP). Acts in the terminal step of the DOXP/MEP pathway for isoprenoid precursor biosynthesis. The polypeptide is 4-hydroxy-3-methylbut-2-enyl diphosphate reductase (Colwellia psychrerythraea (strain 34H / ATCC BAA-681) (Vibrio psychroerythus)).